We begin with the raw amino-acid sequence, 250 residues long: S-adenosyl-L-methionine-dependent 2-deoxy-scyllo-inosamine dehydrogenase (250 aa).

[4Fe-4S] cluster-binding residues include cysteine 16, cysteine 20, cysteine 23, cysteine 169, cysteine 187, and glutamate 223.

The protein belongs to the radical SAM superfamily. [4Fe-4S] cluster serves as cofactor.

The enzyme catalyses 2-deoxy-scyllo-inosamine + S-adenosyl-L-methionine = 3-amino-2,3-dideoxy-scyllo-inosose + 5'-deoxyadenosine + L-methionine + H(+). The protein operates within antibiotic biosynthesis; butirosin biosynthesis. Functionally, catalyzes the radical S-adenosyl-L-methionine (SAM)-dependent two-electron oxidation of 2-deoxy-scyllo-inosamine (DOIA) to amino-dideoxy-scyllo-inosose (amino-DOI) in the biosynthetic pathway of butirosin. This chain is S-adenosyl-L-methionine-dependent 2-deoxy-scyllo-inosamine dehydrogenase (btrN), found in Niallia circulans (Bacillus circulans).